An 806-amino-acid chain; its full sequence is Leucine--tRNA ligase (806 aa).

Positions 54 to 64 match the 'HIGH' region motif; it reads SYPSGDLHMGH. A 'KMSKS' region motif is present at residues 571-575; the sequence is KMSKS. Lys574 is an ATP binding site.

It belongs to the class-I aminoacyl-tRNA synthetase family.

It is found in the cytoplasm. It catalyses the reaction tRNA(Leu) + L-leucine + ATP = L-leucyl-tRNA(Leu) + AMP + diphosphate. In Tropheryma whipplei (strain TW08/27) (Whipple's bacillus), this protein is Leucine--tRNA ligase.